A 264-amino-acid chain; its full sequence is Thymidylate synthase (264 aa).

Arg21 lines the dUMP pocket. A (6R)-5,10-methylene-5,6,7,8-tetrahydrofolate-binding site is contributed by His51. 126–127 (RR) contributes to the dUMP binding site. The active-site Nucleophile is the Cys146. DUMP is bound by residues 166–169 (RSCD), Asn177, and 207–209 (HLY). Asp169 lines the (6R)-5,10-methylene-5,6,7,8-tetrahydrofolate pocket. Ala263 is a binding site for (6R)-5,10-methylene-5,6,7,8-tetrahydrofolate.

This sequence belongs to the thymidylate synthase family. Bacterial-type ThyA subfamily. As to quaternary structure, homodimer.

It is found in the cytoplasm. The catalysed reaction is dUMP + (6R)-5,10-methylene-5,6,7,8-tetrahydrofolate = 7,8-dihydrofolate + dTMP. It participates in pyrimidine metabolism; dTTP biosynthesis. Functionally, catalyzes the reductive methylation of 2'-deoxyuridine-5'-monophosphate (dUMP) to 2'-deoxythymidine-5'-monophosphate (dTMP) while utilizing 5,10-methylenetetrahydrofolate (mTHF) as the methyl donor and reductant in the reaction, yielding dihydrofolate (DHF) as a by-product. This enzymatic reaction provides an intracellular de novo source of dTMP, an essential precursor for DNA biosynthesis. This is Thymidylate synthase from Yersinia pestis bv. Antiqua (strain Antiqua).